The chain runs to 1389 residues: DNA-directed RNA polymerase subunit beta'' (1389 aa).

Zn(2+) contacts are provided by C224, C295, C302, and C305.

It belongs to the RNA polymerase beta' chain family. RpoC2 subfamily. In plastids the minimal PEP RNA polymerase catalytic core is composed of four subunits: alpha, beta, beta', and beta''. When a (nuclear-encoded) sigma factor is associated with the core the holoenzyme is formed, which can initiate transcription. Requires Zn(2+) as cofactor.

Its subcellular location is the plastid. The protein localises to the chloroplast. It catalyses the reaction RNA(n) + a ribonucleoside 5'-triphosphate = RNA(n+1) + diphosphate. Its function is as follows. DNA-dependent RNA polymerase catalyzes the transcription of DNA into RNA using the four ribonucleoside triphosphates as substrates. The polypeptide is DNA-directed RNA polymerase subunit beta'' (Morus indica (Mulberry)).